A 619-amino-acid chain; its full sequence is Phosphomethylpyrimidine synthase (619 aa).

The segment covering 1–11 (MHEQRSLTMNA) has biased composition (polar residues). Positions 1–25 (MHEQRSLTMNALTPAVSTGPLPASR) are disordered. Substrate contacts are provided by residues asparagine 220, methionine 249, tyrosine 278, histidine 314, 334 to 336 (SRG), 375 to 378 (DGLR), and glutamate 414. Histidine 418 contributes to the Zn(2+) binding site. Tyrosine 441 contributes to the substrate binding site. Residue histidine 482 participates in Zn(2+) binding. Residues cysteine 562, cysteine 565, and cysteine 570 each coordinate [4Fe-4S] cluster.

It belongs to the ThiC family. As to quaternary structure, homodimer. [4Fe-4S] cluster is required as a cofactor.

It carries out the reaction 5-amino-1-(5-phospho-beta-D-ribosyl)imidazole + S-adenosyl-L-methionine = 4-amino-2-methyl-5-(phosphooxymethyl)pyrimidine + CO + 5'-deoxyadenosine + formate + L-methionine + 3 H(+). Its pathway is cofactor biosynthesis; thiamine diphosphate biosynthesis. Functionally, catalyzes the synthesis of the hydroxymethylpyrimidine phosphate (HMP-P) moiety of thiamine from aminoimidazole ribotide (AIR) in a radical S-adenosyl-L-methionine (SAM)-dependent reaction. In Mesorhizobium japonicum (strain LMG 29417 / CECT 9101 / MAFF 303099) (Mesorhizobium loti (strain MAFF 303099)), this protein is Phosphomethylpyrimidine synthase.